The following is a 372-amino-acid chain: Aminomethyltransferase (372 aa).

This sequence belongs to the GcvT family. The glycine cleavage system is composed of four proteins: P, T, L and H.

The enzyme catalyses N(6)-[(R)-S(8)-aminomethyldihydrolipoyl]-L-lysyl-[protein] + (6S)-5,6,7,8-tetrahydrofolate = N(6)-[(R)-dihydrolipoyl]-L-lysyl-[protein] + (6R)-5,10-methylene-5,6,7,8-tetrahydrofolate + NH4(+). Functionally, the glycine cleavage system catalyzes the degradation of glycine. The polypeptide is Aminomethyltransferase (Prochlorococcus marinus (strain NATL1A)).